An 83-amino-acid chain; its full sequence is Apolipoprotein C-I, basic form (83 aa).

A signal peptide spans 1-26 (MRLFLSLPVLVVVLSMVLEGPAPAQG).

It belongs to the apolipoprotein C1 family.

Its subcellular location is the secreted. Functionally, inhibitor of lipoprotein binding to the low density lipoprotein (LDL) receptor, LDL receptor-related protein, and very low density lipoprotein (VLDL) receptor. Associates with high density lipoproteins (HDL) and the triacylglycerol-rich lipoproteins in the plasma and makes up about 10% of the protein of the VLDL and 2% of that of HDL. Appears to interfere directly with fatty acid uptake and is also the major plasma inhibitor of cholesteryl ester transfer protein (CETP). Binds free fatty acids and reduces their intracellular esterification. Modulates the interaction of APOE with beta-migrating VLDL and inhibits binding of beta-VLDL to the LDL receptor-related protein. This Cercocebus atys (Sooty mangabey) protein is Apolipoprotein C-I, basic form (APOC1B).